Here is a 79-residue protein sequence, read N- to C-terminus: Ribonuclease P protein component 1 (79 aa).

Belongs to the eukaryotic/archaeal RNase P protein component 1 family. Consists of a catalytic RNA component and at least 4-5 protein subunits.

It localises to the cytoplasm. It carries out the reaction Endonucleolytic cleavage of RNA, removing 5'-extranucleotides from tRNA precursor.. Its function is as follows. Part of ribonuclease P, a protein complex that generates mature tRNA molecules by cleaving their 5'-ends. The sequence is that of Ribonuclease P protein component 1 from Saccharolobus solfataricus (strain ATCC 35092 / DSM 1617 / JCM 11322 / P2) (Sulfolobus solfataricus).